A 417-amino-acid polypeptide reads, in one-letter code: Histidine biosynthesis bifunctional protein his7 (417 aa).

Residues 225–299 form a phosphoribosyl-AMP cyclohydrolase region; the sequence is GLVYSSKESV…HLDTLHCFGQ (75 aa). Positions 303-387 are phosphoribosyl-ATP pyrophosphohydrolase; it reads LCQLEKTLID…ISRHLDLKHR (85 aa).

It localises to the cytoplasm. It carries out the reaction 1-(5-phospho-beta-D-ribosyl)-5'-AMP + H2O = 1-(5-phospho-beta-D-ribosyl)-5-[(5-phospho-beta-D-ribosylamino)methylideneamino]imidazole-4-carboxamide. The enzyme catalyses 1-(5-phospho-beta-D-ribosyl)-ATP + H2O = 1-(5-phospho-beta-D-ribosyl)-5'-AMP + diphosphate + H(+). Its pathway is amino-acid biosynthesis; L-histidine biosynthesis; L-histidine from 5-phospho-alpha-D-ribose 1-diphosphate: step 2/9. It participates in amino-acid biosynthesis; L-histidine biosynthesis; L-histidine from 5-phospho-alpha-D-ribose 1-diphosphate: step 3/9. The polypeptide is Histidine biosynthesis bifunctional protein his7 (Schizosaccharomyces pombe (strain 972 / ATCC 24843) (Fission yeast)).